A 541-amino-acid chain; its full sequence is Chaperonin GroEL 2 (541 aa).

ATP-binding positions include Thr29–Pro32 and Asp86–Thr90. Residue Lys132 forms an Isoglutamyl lysine isopeptide (Lys-Gln) (interchain with Q-Cter in protein Pup) linkage. Residues Gly413, Asn476–Ala478, and Asp492 contribute to the ATP site.

Belongs to the chaperonin (HSP60) family. In terms of assembly, forms a cylinder of 14 subunits composed of two heptameric rings stacked back-to-back. Interacts with the co-chaperonin GroES.

The protein resides in the secreted. Its subcellular location is the capsule. The protein localises to the cell surface. It localises to the cell wall. It carries out the reaction ATP + H2O + a folded polypeptide = ADP + phosphate + an unfolded polypeptide.. In terms of biological role, together with its co-chaperonin GroES, plays an essential role in assisting protein folding. The GroEL-GroES system forms a nano-cage that allows encapsulation of the non-native substrate proteins and provides a physical environment optimized to promote and accelerate protein folding. The sequence is that of Chaperonin GroEL 2 from Mycolicibacterium smegmatis (strain ATCC 700084 / mc(2)155) (Mycobacterium smegmatis).